The following is a 227-amino-acid chain: Cytochrome c oxidase subunit 2 (227 aa).

At 1-14 the chain is on the mitochondrial intermembrane side; sequence MAYPFQLGLQDASS. The chain crosses the membrane as a helical span at residues 15–45; it reads PIMEELMNFHDHTLMIVFLISSLVLYLMALM. Over 46–59 the chain is Mitochondrial matrix; sequence LSTKLIHTSTMDAQ. A helical membrane pass occupies residues 60-87; sequence EVETIWTILPAIILIMIALPSLRILYMM. The Mitochondrial intermembrane portion of the chain corresponds to 88 to 227; it reads DEINNPILTV…LFENWSMSMT (140 aa). Cu cation contacts are provided by H161, C196, E198, C200, H204, and M207. A Mg(2+)-binding site is contributed by E198.

It belongs to the cytochrome c oxidase subunit 2 family. In terms of assembly, component of the cytochrome c oxidase (complex IV, CIV), a multisubunit enzyme composed of 14 subunits. The complex is composed of a catalytic core of 3 subunits MT-CO1, MT-CO2 and MT-CO3, encoded in the mitochondrial DNA, and 11 supernumerary subunits COX4I, COX5A, COX5B, COX6A, COX6B, COX6C, COX7A, COX7B, COX7C, COX8 and NDUFA4, which are encoded in the nuclear genome. The complex exists as a monomer or a dimer and forms supercomplexes (SCs) in the inner mitochondrial membrane with NADH-ubiquinone oxidoreductase (complex I, CI) and ubiquinol-cytochrome c oxidoreductase (cytochrome b-c1 complex, complex III, CIII), resulting in different assemblies (supercomplex SCI(1)III(2)IV(1) and megacomplex MCI(2)III(2)IV(2)). Found in a complex with TMEM177, COA6, COX18, COX20, SCO1 and SCO2. Interacts with TMEM177 in a COX20-dependent manner. Interacts with COX20. Interacts with COX16. Cu cation serves as cofactor.

The protein resides in the mitochondrion inner membrane. It catalyses the reaction 4 Fe(II)-[cytochrome c] + O2 + 8 H(+)(in) = 4 Fe(III)-[cytochrome c] + 2 H2O + 4 H(+)(out). Component of the cytochrome c oxidase, the last enzyme in the mitochondrial electron transport chain which drives oxidative phosphorylation. The respiratory chain contains 3 multisubunit complexes succinate dehydrogenase (complex II, CII), ubiquinol-cytochrome c oxidoreductase (cytochrome b-c1 complex, complex III, CIII) and cytochrome c oxidase (complex IV, CIV), that cooperate to transfer electrons derived from NADH and succinate to molecular oxygen, creating an electrochemical gradient over the inner membrane that drives transmembrane transport and the ATP synthase. Cytochrome c oxidase is the component of the respiratory chain that catalyzes the reduction of oxygen to water. Electrons originating from reduced cytochrome c in the intermembrane space (IMS) are transferred via the dinuclear copper A center (CU(A)) of subunit 2 and heme A of subunit 1 to the active site in subunit 1, a binuclear center (BNC) formed by heme A3 and copper B (CU(B)). The BNC reduces molecular oxygen to 2 water molecules using 4 electrons from cytochrome c in the IMS and 4 protons from the mitochondrial matrix. The chain is Cytochrome c oxidase subunit 2 (MT-CO2) from Gerbillus gerbillus (Lesser Egyptian gerbil).